The sequence spans 90 residues: U7-theraphotoxin-Hhn1i (90 aa).

A signal peptide spans 1–19 (MKTAIFTVVLALAVFAVLS). Residues 20 to 50 (FGWEANEKALSEEFTELIHEKEAASETEARE) constitute a propeptide that is removed on maturation. 3 disulfide bridges follow: Cys51-Cys65, Cys58-Cys70, and Cys64-Cys81.

This sequence belongs to the neurotoxin 10 (Hwtx-1) family. 13 (Hntx-13) subfamily. In terms of tissue distribution, expressed by the venom gland.

It is found in the secreted. Its function is as follows. Ion channel inhibitor. The polypeptide is U7-theraphotoxin-Hhn1i (Cyriopagopus hainanus (Chinese bird spider)).